The sequence spans 413 residues: MDIYTYKKHILFKKCFLYFWKIKNVIKKKNTKKFNQIVLSLFLGGFSSFSILYCVQSILPVFSKQFCLTATESSLSLSAATATMSIGTLFIGPLSDRIGRKSIMSSSLLIAAVLTIICSISNNWTVIVFLRALTGLALSGVVAVAMTYIVEEVHPNSVSFCMGLYISGNTIGGCSGRILSSILAEYFSWHIAFIVIGFFSLMSSCLFLYFLPSSKNFYPISIDFNKFLKNFYLHLKNPTLLILFAIGFMLMGSFITIFNYISYRLMLSPFFLSSSNIGFLSIIYLTGVYSSPKAGILINQYNRSSILRIALLLMILGLLMTQYNEIFIIILGLVIFSSGFFASHSIASSWIGFHAKIAKVQATSLYLFFYYLGSSIFGTFGGFFWFYLKWIGISSFIIIILIFAILLSLKLKK.

Transmembrane regions (helical) follow at residues 42 to 62 (FLGG…LPVF), 75 to 95 (LSLS…GPLS), 109 to 129 (LIAA…VIVF), 133 to 153 (LTGL…VEEV), 157 to 179 (SVSF…GRIL), 191 to 211 (IAFI…LYFL), 238 to 258 (PTLL…ITIF), 265 to 285 (LMLS…IIYL), 304 to 324 (SSIL…TQYN), 326 to 346 (IFII…SHSI), 362 to 382 (ATSL…TFGG), and 383 to 403 (FFWF…ILIF).

Belongs to the major facilitator superfamily.

It localises to the cell membrane. This is an uncharacterized protein from Buchnera aphidicola subsp. Schizaphis graminum (strain Sg).